The chain runs to 169 residues: Protein-export protein SecB (169 aa).

Belongs to the SecB family. Homotetramer, a dimer of dimers. One homotetramer interacts with 1 SecA dimer.

The protein localises to the cytoplasm. In terms of biological role, one of the proteins required for the normal export of preproteins out of the cell cytoplasm. It is a molecular chaperone that binds to a subset of precursor proteins, maintaining them in a translocation-competent state. It also specifically binds to its receptor SecA. This is Protein-export protein SecB from Haemophilus influenzae (strain 86-028NP).